The chain runs to 344 residues: Ferrochelatase (344 aa).

Fe cation-binding residues include H214 and E295.

It belongs to the ferrochelatase family.

The protein localises to the cytoplasm. The catalysed reaction is heme b + 2 H(+) = protoporphyrin IX + Fe(2+). The protein operates within porphyrin-containing compound metabolism; protoheme biosynthesis; protoheme from protoporphyrin-IX: step 1/1. Catalyzes the ferrous insertion into protoporphyrin IX. The polypeptide is Ferrochelatase (Rhizobium etli (strain CIAT 652)).